Reading from the N-terminus, the 120-residue chain is Probable early E4 13 kDa protein (120 aa).

This Human adenovirus A serotype 12 (HAdV-12) protein is Probable early E4 13 kDa protein.